The following is a 393-amino-acid chain: Short-chain dehydrogenase/reductase family 42E member 1 (393 aa).

The active-site Proton acceptor is Y152. K156 is an NAD(+) binding site. Helical transmembrane passes span 282–302 and 371–391; these read LPLTLIYCFAFLTEMTHFILG and GLVILLVVTVVLVWLLPSVIL.

This sequence belongs to the 3-beta-HSD family.

It localises to the membrane. This chain is Short-chain dehydrogenase/reductase family 42E member 1 (SDR42E1), found in Bos taurus (Bovine).